Reading from the N-terminus, the 419-residue chain is UDP-N-acetylglucosamine 1-carboxyvinyltransferase (419 aa).

Phosphoenolpyruvate is bound at residue 22 to 23 (KN). Arginine 93 is a UDP-N-acetyl-alpha-D-glucosamine binding site. The active-site Proton donor is the cysteine 117. Cysteine 117 bears the 2-(S-cysteinyl)pyruvic acid O-phosphothioketal mark. 2 residues coordinate UDP-N-acetyl-alpha-D-glucosamine: aspartate 307 and isoleucine 329.

It belongs to the EPSP synthase family. MurA subfamily.

The protein resides in the cytoplasm. It catalyses the reaction phosphoenolpyruvate + UDP-N-acetyl-alpha-D-glucosamine = UDP-N-acetyl-3-O-(1-carboxyvinyl)-alpha-D-glucosamine + phosphate. It functions in the pathway cell wall biogenesis; peptidoglycan biosynthesis. Functionally, cell wall formation. Adds enolpyruvyl to UDP-N-acetylglucosamine. This chain is UDP-N-acetylglucosamine 1-carboxyvinyltransferase, found in Shewanella putrefaciens (strain CN-32 / ATCC BAA-453).